Consider the following 434-residue polypeptide: Trigger factor (434 aa).

Positions 162–247 (GDKINISLIA…FNTVEQAKLP (86 aa)) constitute a PPIase FKBP-type domain.

The protein belongs to the FKBP-type PPIase family. Tig subfamily.

It localises to the cytoplasm. The enzyme catalyses [protein]-peptidylproline (omega=180) = [protein]-peptidylproline (omega=0). Involved in protein export. Acts as a chaperone by maintaining the newly synthesized protein in an open conformation. Functions as a peptidyl-prolyl cis-trans isomerase. In Methylobacillus flagellatus (strain ATCC 51484 / DSM 6875 / VKM B-1610 / KT), this protein is Trigger factor.